Here is a 113-residue protein sequence, read N- to C-terminus: Prostate and testis expressed protein 2 (113 aa).

The N-terminal stretch at 1 to 26 (MLVLFLLGTVFLLCPYWGELHDPIKA) is a signal peptide. In terms of domain architecture, UPAR/Ly6 spans 29 to 110 (IMCYECKKYH…CDHSNYCNLP (82 aa)). Intrachain disulfides connect Cys31-Cys57, Cys34-Cys42, Cys49-Cys80, and Cys84-Cys101.

The protein belongs to the PATE family. As to expression, isoform 1 and isoform 2 are expressed in prostate and testis. Isoform 2 is expressed in male and female brain at equivalent levels, in particular in cerebellum, cerebral cortex, corpus callosum, occipital, parrietal and temporal lobes, and pons, but not in amygdala, cerebral peduncle, hippocampus and thalamus.

The protein resides in the secreted. The polypeptide is Prostate and testis expressed protein 2 (PATE2) (Homo sapiens (Human)).